The chain runs to 419 residues: Transcription termination factor Rho (419 aa).

Residues 48 to 123 (GFTCSGTLEI…VRLDSINGDH (76 aa)) enclose the Rho RNA-BD domain. ATP is bound by residues 169–174 (GKGQRA), 181–186 (KIGKTV), and arginine 212.

Belongs to the Rho family. In terms of assembly, homohexamer. The homohexamer assembles into an open ring structure.

Facilitates transcription termination by a mechanism that involves Rho binding to the nascent RNA, activation of Rho's RNA-dependent ATPase activity, and release of the mRNA from the DNA template. This chain is Transcription termination factor Rho, found in Neisseria gonorrhoeae.